The sequence spans 998 residues: tRNA (34-2'-O)-methyltransferase regulator WDR6 (998 aa).

11 WD repeats span residues 148–185 (LYYT…ESDP), 200–239 (AHNG…DWTT), 250–291 (GHSS…ILKR), 294–333 (QFGA…NRPK), 476–515 (NNRE…DDFQ), 527–566 (MGSN…STLR), 567–608 (VSQR…LLQL), 664–704 (RNCN…LSQR), 779–821 (ARLM…QLDL), 826–865 (DIQR…TYFQ), and 868–911 (LHVT…VEQK).

This sequence belongs to the WD repeat WDR6 family. As to quaternary structure, interacts with Trm7-34.

It is found in the cytoplasm. Its function is as follows. Together with methyltransferase Trm7-34, methylates the 2'-O-ribose of nucleotides at position 34 of the anticodon loop of substrate tRNAs. The protein is tRNA (34-2'-O)-methyltransferase regulator WDR6 of Drosophila melanogaster (Fruit fly).